The sequence spans 321 residues: GTP 3',8-cyclase (321 aa).

Positions 5–233 (SFNRVIDYIR…QGSSKIYTLE (229 aa)) constitute a Radical SAM core domain. Arg-14 contacts GTP. [4Fe-4S] cluster is bound by residues Cys-21 and Cys-25. Tyr-27 contributes to the S-adenosyl-L-methionine binding site. Cys-28 is a [4Fe-4S] cluster binding site. Arg-64 contacts GTP. An S-adenosyl-L-methionine-binding site is contributed by Gly-68. Residue Ser-95 participates in GTP binding. Ser-119 contributes to the S-adenosyl-L-methionine binding site. Lys-155 contributes to the GTP binding site. An S-adenosyl-L-methionine-binding site is contributed by Met-189. Residues Cys-249 and Cys-252 each contribute to the [4Fe-4S] cluster site. 254–256 (RIR) is a binding site for GTP. Cys-266 contributes to the [4Fe-4S] cluster binding site.

This sequence belongs to the radical SAM superfamily. MoaA family. In terms of assembly, monomer and homodimer. [4Fe-4S] cluster is required as a cofactor.

The catalysed reaction is GTP + AH2 + S-adenosyl-L-methionine = (8S)-3',8-cyclo-7,8-dihydroguanosine 5'-triphosphate + 5'-deoxyadenosine + L-methionine + A + H(+). The protein operates within cofactor biosynthesis; molybdopterin biosynthesis. In terms of biological role, catalyzes the cyclization of GTP to (8S)-3',8-cyclo-7,8-dihydroguanosine 5'-triphosphate. This Helicobacter pylori (strain ATCC 700392 / 26695) (Campylobacter pylori) protein is GTP 3',8-cyclase.